A 364-amino-acid chain; its full sequence is Peptide chain release factor 2 (364 aa).

Glutamine 252 is modified (N5-methylglutamine).

Belongs to the prokaryotic/mitochondrial release factor family. Post-translationally, methylated by PrmC. Methylation increases the termination efficiency of RF2.

It localises to the cytoplasm. Functionally, peptide chain release factor 2 directs the termination of translation in response to the peptide chain termination codons UGA and UAA. This is Peptide chain release factor 2 from Clostridium perfringens (strain SM101 / Type A).